Reading from the N-terminus, the 258-residue chain is Acyl-[acyl-carrier-protein]--UDP-N-acetylglucosamine O-acyltransferase (258 aa).

Belongs to the transferase hexapeptide repeat family. LpxA subfamily. In terms of assembly, homotrimer.

It is found in the cytoplasm. The enzyme catalyses a (3R)-hydroxyacyl-[ACP] + UDP-N-acetyl-alpha-D-glucosamine = a UDP-3-O-[(3R)-3-hydroxyacyl]-N-acetyl-alpha-D-glucosamine + holo-[ACP]. Its pathway is glycolipid biosynthesis; lipid IV(A) biosynthesis; lipid IV(A) from (3R)-3-hydroxytetradecanoyl-[acyl-carrier-protein] and UDP-N-acetyl-alpha-D-glucosamine: step 1/6. Its function is as follows. Involved in the biosynthesis of lipid A, a phosphorylated glycolipid that anchors the lipopolysaccharide to the outer membrane of the cell. This is Acyl-[acyl-carrier-protein]--UDP-N-acetylglucosamine O-acyltransferase from Myxococcus xanthus (strain DK1622).